The following is a 192-amino-acid chain: Ion-translocating oxidoreductase complex subunit B (192 aa).

The interval 1 to 26 (MNAIWIAVAAVSLLGLAFGAILGYAS) is hydrophobic. The 4Fe-4S domain maps to 32–91 (EDDPVVEKIDEILPQSQCGQCGYPGCRPYAEAISCNGEKINRCAPGGEAVMLKIAELLNV). Positions 49, 52, 57, 74, 117, 120, 123, 127, 147, 150, 153, and 157 each coordinate [4Fe-4S] cluster. 4Fe-4S ferredoxin-type domains are found at residues 108 to 137 (MVAV…GATR) and 138 to 167 (AMHT…LQPV).

Belongs to the 4Fe4S bacterial-type ferredoxin family. RnfB subfamily. As to quaternary structure, the complex is composed of six subunits: RsxA, RsxB, RsxC, RsxD, RsxE and RsxG. The cofactor is [4Fe-4S] cluster.

It is found in the cell inner membrane. Functionally, part of a membrane-bound complex that couples electron transfer with translocation of ions across the membrane. Required to maintain the reduced state of SoxR. This chain is Ion-translocating oxidoreductase complex subunit B, found in Escherichia coli O127:H6 (strain E2348/69 / EPEC).